We begin with the raw amino-acid sequence, 359 residues long: Alanine racemase (359 aa).

The active-site Proton acceptor; specific for D-alanine is the lysine 34. The residue at position 34 (lysine 34) is an N6-(pyridoxal phosphate)lysine. A substrate-binding site is contributed by arginine 129. Tyrosine 255 acts as the Proton acceptor; specific for L-alanine in catalysis. Methionine 303 contacts substrate.

This sequence belongs to the alanine racemase family. Pyridoxal 5'-phosphate is required as a cofactor.

The catalysed reaction is L-alanine = D-alanine. It functions in the pathway amino-acid biosynthesis; D-alanine biosynthesis; D-alanine from L-alanine: step 1/1. Functionally, catalyzes the interconversion of L-alanine and D-alanine. May also act on other amino acids. This chain is Alanine racemase (alr), found in Shigella dysenteriae serotype 1 (strain Sd197).